Here is a 204-residue protein sequence, read N- to C-terminus: Ribosomal RNA small subunit methyltransferase G (204 aa).

S-adenosyl-L-methionine contacts are provided by residues Gly-69, Phe-74, 123–124, and Arg-137; that span reads IE.

This sequence belongs to the methyltransferase superfamily. RNA methyltransferase RsmG family.

It localises to the cytoplasm. It carries out the reaction guanosine(527) in 16S rRNA + S-adenosyl-L-methionine = N(7)-methylguanosine(527) in 16S rRNA + S-adenosyl-L-homocysteine. In terms of biological role, specifically methylates the N7 position of guanine in position 527 of 16S rRNA. The sequence is that of Ribosomal RNA small subunit methyltransferase G from Ruegeria pomeroyi (strain ATCC 700808 / DSM 15171 / DSS-3) (Silicibacter pomeroyi).